Here is a 303-residue protein sequence, read N- to C-terminus: ADP-ribosyl cyclase/cyclic ADP-ribose hydrolase 1 (303 aa).

Topologically, residues 1–21 (MANYEFSQVSEDRPGCRLTRK) are cytoplasmic. The chain crosses the membrane as a helical; Signal-anchor for type II membrane protein span at residues 22-44 (AQIGLGVGLLLLVALVVVVVIVL). Topologically, residues 45–303 (WPRSPLVWKG…PEHPSCRLNV (259 aa)) are extracellular. 3 disulfides stabilise this stretch: Cys-69-Cys-85, Cys-102-Cys-183, and Cys-163-Cys-176. An N-linked (GlcNAc...) asparagine glycan is attached at Asn-103. Cys-122 is a catalytic residue. Asn-123 carries N-linked (GlcNAc...) asparagine glycosylation. The active site involves Cys-204. 2 N-linked (GlcNAc...) asparagine glycosylation sites follow: Asn-212 and Asn-222. 2 disulfide bridges follow: Cys-257-Cys-278 and Cys-290-Cys-299.

It belongs to the ADP-ribosyl cyclase family. As to quaternary structure, homodimer. Spleen, liver, heart, thymus, thyroid gland, ileum, colon, cerebellum, salivary gland, adrenal gland, jejunum, islets of Langerhans and osteoclasts.

It is found in the cell membrane. It catalyses the reaction NAD(+) = cyclic ADP-beta-D-ribose + nicotinamide + H(+). It carries out the reaction nicotinate + NADP(+) = nicotinate-adenine dinucleotide phosphate + nicotinamide. The enzyme catalyses NAD(+) + H2O = ADP-D-ribose + nicotinamide + H(+). Its activity is regulated as follows. Both NAADP and cADPR synthesis are inhibited by nicotinic acid. In terms of biological role, synthesizes the second messengers cyclic ADP-ribose and nicotinate-adenine dinucleotide phosphate, the former a second messenger for glucose-induced insulin secretion, the latter a Ca(2+) mobilizer. Also has cADPR hydrolase activity. Functionally, regulates osteoclastic bone resorption, probably via production of cyclic ADP-ribose and triggering of a cytosolic calcium ion signal through ryanodine receptor activation. This is ADP-ribosyl cyclase/cyclic ADP-ribose hydrolase 1 (Cd38) from Rattus norvegicus (Rat).